The following is a 253-amino-acid chain: Imidazole glycerol phosphate synthase subunit HisF (253 aa).

Active-site residues include Asp11 and Asp130.

Belongs to the HisA/HisF family. Heterodimer of HisH and HisF.

The protein resides in the cytoplasm. It catalyses the reaction 5-[(5-phospho-1-deoxy-D-ribulos-1-ylimino)methylamino]-1-(5-phospho-beta-D-ribosyl)imidazole-4-carboxamide + L-glutamine = D-erythro-1-(imidazol-4-yl)glycerol 3-phosphate + 5-amino-1-(5-phospho-beta-D-ribosyl)imidazole-4-carboxamide + L-glutamate + H(+). It participates in amino-acid biosynthesis; L-histidine biosynthesis; L-histidine from 5-phospho-alpha-D-ribose 1-diphosphate: step 5/9. Its function is as follows. IGPS catalyzes the conversion of PRFAR and glutamine to IGP, AICAR and glutamate. The HisF subunit catalyzes the cyclization activity that produces IGP and AICAR from PRFAR using the ammonia provided by the HisH subunit. The protein is Imidazole glycerol phosphate synthase subunit HisF of Geotalea daltonii (strain DSM 22248 / JCM 15807 / FRC-32) (Geobacter daltonii).